Consider the following 464-residue polypeptide: ATP synthase subunit beta (464 aa).

151 to 158 (GGAGVGKT) contacts ATP.

It belongs to the ATPase alpha/beta chains family. In terms of assembly, F-type ATPases have 2 components, CF(1) - the catalytic core - and CF(0) - the membrane proton channel. CF(1) has five subunits: alpha(3), beta(3), gamma(1), delta(1), epsilon(1). CF(0) has three main subunits: a(1), b(2) and c(9-12). The alpha and beta chains form an alternating ring which encloses part of the gamma chain. CF(1) is attached to CF(0) by a central stalk formed by the gamma and epsilon chains, while a peripheral stalk is formed by the delta and b chains.

The protein localises to the cell membrane. It carries out the reaction ATP + H2O + 4 H(+)(in) = ADP + phosphate + 5 H(+)(out). In terms of biological role, produces ATP from ADP in the presence of a proton gradient across the membrane. The catalytic sites are hosted primarily by the beta subunits. This Clostridium kluyveri (strain ATCC 8527 / DSM 555 / NBRC 12016 / NCIMB 10680 / K1) protein is ATP synthase subunit beta.